Consider the following 186-residue polypeptide: Superoxide dismutase [Cu-Zn] (186 aa).

Positions M1–A22 are cleaved as a signal peptide. The Cu cation site is built by H79, H81, and H104. A disulfide bridge links C86 with C182. H104, H113, H122, and D125 together coordinate Zn(2+). Residue H160 participates in Cu cation binding.

It belongs to the Cu-Zn superoxide dismutase family. Homodimer. Cu cation is required as a cofactor. Zn(2+) serves as cofactor.

It is found in the periplasm. It carries out the reaction 2 superoxide + 2 H(+) = H2O2 + O2. Functionally, destroys radicals which are normally produced within the cells and which are toxic to biological systems. This is Superoxide dismutase [Cu-Zn] (sodC) from Neisseria meningitidis serogroup A / serotype 4A (strain DSM 15465 / Z2491).